A 557-amino-acid chain; its full sequence is Probable serine/threonine-protein kinase WNK7 (557 aa).

Residues 28–285 (IRYKEVIGKG…AEELLLDSFL (258 aa)) enclose the Protein kinase domain. ATP-binding positions include 108 to 111 (TELF) and Lys-158. Residue Asp-175 is the Proton acceptor of the active site. The segment covering 451 to 477 (QNQSSKDNHQNGASSQAGESISHSLSS) has biased composition (polar residues). Residues 451-517 (QNQSSKDNHQ…EEEEDERLKE (67 aa)) are disordered. Ser-505 bears the Phosphoserine mark.

The protein belongs to the protein kinase superfamily. Ser/Thr protein kinase family. WNK subfamily.

It carries out the reaction L-seryl-[protein] + ATP = O-phospho-L-seryl-[protein] + ADP + H(+). The enzyme catalyses L-threonyl-[protein] + ATP = O-phospho-L-threonyl-[protein] + ADP + H(+). Its function is as follows. May regulate flowering time by modulating the photoperiod pathway. The chain is Probable serine/threonine-protein kinase WNK7 (WNK7) from Arabidopsis thaliana (Mouse-ear cress).